The following is a 299-amino-acid chain: Meso-diaminopimelate D-dehydrogenase (299 aa).

NADP(+) is bound by residues Tyr11–Ile14, Arg36, Cys67–Thr70, Ser90–Asp92, and Ala119–Pro123. Residues Asp92, Asp122, Phe146, Met152–Gly153, Thr171, Arg181, His227, and Asn253 contribute to the substrate site.

The protein belongs to the diaminopimelate dehydrogenase family. In terms of assembly, homodimer.

The enzyme catalyses meso-2,6-diaminopimelate + NADP(+) + H2O = (S)-2-amino-6-oxoheptanedioate + NH4(+) + NADPH + H(+). The protein operates within amino-acid biosynthesis; L-lysine biosynthesis via DAP pathway; DL-2,6-diaminopimelate from (S)-tetrahydrodipicolinate: step 1/1. Its function is as follows. Catalyzes the reversible NADPH-dependent reductive amination of L-2-amino-6-oxopimelate, the acyclic form of L-tetrahydrodipicolinate, to generate the meso compound, D,L-2,6-diaminopimelate. Probably plays a role in lysine biosynthesis. Exhibits a high substrate specificity for meso-2,6-diaminopimelate (m-DAP), since the activity with L,L-2,6-diaminopimelate is less than 5% of the activity observed with m-DAP. Can use NAD(+) only very poorly since the activity observed in the presence of NAD(+) is about 14% of that with NADP(+). The chain is Meso-diaminopimelate D-dehydrogenase (ddh) from Bacteroides fragilis (strain ATCC 25285 / DSM 2151 / CCUG 4856 / JCM 11019 / LMG 10263 / NCTC 9343 / Onslow / VPI 2553 / EN-2).